The sequence spans 316 residues: Glycerol-3-phosphate dehydrogenase [NAD(P)+] (316 aa).

Positions 14, 15, 35, and 109 each coordinate NADPH. Positions 109 and 137 each coordinate sn-glycerol 3-phosphate. Alanine 141 serves as a coordination point for NADPH. Positions 192, 248, 258, 259, and 260 each coordinate sn-glycerol 3-phosphate. Lysine 192 (proton acceptor) is an active-site residue. Arginine 259 contributes to the NADPH binding site. Residues leucine 283 and glutamate 285 each contribute to the NADPH site.

The protein belongs to the NAD-dependent glycerol-3-phosphate dehydrogenase family.

The protein resides in the cytoplasm. It carries out the reaction sn-glycerol 3-phosphate + NAD(+) = dihydroxyacetone phosphate + NADH + H(+). The catalysed reaction is sn-glycerol 3-phosphate + NADP(+) = dihydroxyacetone phosphate + NADPH + H(+). It participates in membrane lipid metabolism; glycerophospholipid metabolism. In terms of biological role, catalyzes the reduction of the glycolytic intermediate dihydroxyacetone phosphate (DHAP) to sn-glycerol 3-phosphate (G3P), the key precursor for phospholipid synthesis. The protein is Glycerol-3-phosphate dehydrogenase [NAD(P)+] of Rickettsia prowazekii (strain Madrid E).